Here is a 380-residue protein sequence, read N- to C-terminus: RNA-binding motif protein, Y chromosome (380 aa).

An RRM domain is found at 8–86 (GKIFIGGLNI…KRIKVKQARR (79 aa)). Disordered stretches follow at residues 82 to 226 (KQAR…STSR) and 279 to 358 (HEAP…YSAS). Residues 166-178 (RSATSAQTRSNTG) show a composition bias toward polar residues. 2 stretches are compositionally biased toward basic and acidic residues: residues 180–190 (RGREPHRREIS) and 333–351 (IDRE…HSPK).

Interacts with SRSF3/SRP20, SRSF9/SRP30, SRSF5/SRP40, and SRSF6/SRP55; this interaction inhibits SRSF family member pre-mRNA splicing. Interacts with splicing factor proteins and KHDRBS3. Testis-specific.

It localises to the nucleus. RNA-binding protein involved in pre-mRNA splicing. Required for sperm development. Acts additively with TRA2B to promote exon 7 inclusion of the survival motor neuron SMN. Binds non-specifically to mRNAs. This Mus musculus (Mouse) protein is RNA-binding motif protein, Y chromosome.